The primary structure comprises 215 residues: Cytochrome b6 (215 aa).

Residues 32–52 (IFYCLGGITLTCFLVQVATGF) traverse the membrane as a helical segment. A heme c-binding site is contributed by Cys-35. Heme b is bound by residues His-86 and His-100. The next 3 membrane-spanning stretches (helical) occupy residues 90–110 (ASMM…TGGF), 116–136 (LTWV…VTGY), and 186–206 (LHTF…FLMI). His-187 and His-202 together coordinate heme b.

This sequence belongs to the cytochrome b family. PetB subfamily. The 4 large subunits of the cytochrome b6-f complex are cytochrome b6, subunit IV (17 kDa polypeptide, PetD), cytochrome f and the Rieske protein, while the 4 small subunits are PetG, PetL, PetM and PetN. The complex functions as a dimer. The cofactor is heme b. It depends on heme c as a cofactor.

It is found in the plastid. It localises to the chloroplast thylakoid membrane. Component of the cytochrome b6-f complex, which mediates electron transfer between photosystem II (PSII) and photosystem I (PSI), cyclic electron flow around PSI, and state transitions. This is Cytochrome b6 from Eucalyptus globulus subsp. globulus (Tasmanian blue gum).